A 177-amino-acid chain; its full sequence is Ribulose bisphosphate carboxylase small subunit, chloroplastic 2 (177 aa).

The N-terminal 56 residues, 1–56 (MASSMMASTAAVARAGPAQSNMVAPFNGLRSSVAFPATRKANKNLSTLPSNGGKVS), are a transit peptide targeting the chloroplast.

It belongs to the RuBisCO small chain family. In terms of assembly, heterohexadecamer of 8 large and 8 small subunits.

The protein localises to the plastid. It localises to the chloroplast. Functionally, ruBisCO catalyzes two reactions: the carboxylation of D-ribulose 1,5-bisphosphate, the primary event in carbon dioxide fixation, as well as the oxidative fragmentation of the pentose substrate. Both reactions occur simultaneously and in competition at the same active site. Although the small subunit is not catalytic it is essential for maximal activity. This chain is Ribulose bisphosphate carboxylase small subunit, chloroplastic 2, found in Lemna gibba (Swollen duckweed).